The chain runs to 629 residues: tRNA uridine 5-carboxymethylaminomethyl modification enzyme MnmG (629 aa).

FAD is bound by residues 14-19, Val126, and Ser181; that span reads GAGHAG. 273 to 287 contacts NAD(+); that stretch reads GPRYCPSIEDKVVRF. Gln370 provides a ligand contact to FAD.

The protein belongs to the MnmG family. In terms of assembly, homodimer. Heterotetramer of two MnmE and two MnmG subunits. It depends on FAD as a cofactor.

Its subcellular location is the cytoplasm. NAD-binding protein involved in the addition of a carboxymethylaminomethyl (cmnm) group at the wobble position (U34) of certain tRNAs, forming tRNA-cmnm(5)s(2)U34. The sequence is that of tRNA uridine 5-carboxymethylaminomethyl modification enzyme MnmG from Geobacillus kaustophilus (strain HTA426).